A 303-amino-acid polypeptide reads, in one-letter code: Probable 5-dehydro-4-deoxyglucarate dehydratase (303 aa).

This sequence belongs to the DapA family.

The enzyme catalyses 5-dehydro-4-deoxy-D-glucarate + H(+) = 2,5-dioxopentanoate + CO2 + H2O. The protein operates within carbohydrate acid metabolism; D-glucarate degradation; 2,5-dioxopentanoate from D-glucarate: step 2/2. The sequence is that of Probable 5-dehydro-4-deoxyglucarate dehydratase from Pseudomonas syringae pv. syringae (strain B728a).